A 272-amino-acid chain; its full sequence is Iodotyrosine deiodinase (272 aa).

The chain crosses the membrane as a helical span at residues 5 to 25; the sequence is LSGVSYGLLAGILAMLIHLVY. Residues 82 to 86, S110, and 110 to 111 contribute to the FMN site; these read RRSVR and SG. Residues A112, E139, Y143, and K164 each contribute to the 3-iodo-L-tyrosine site. FMN contacts are provided by residues 219–221 and R261; that span reads TST.

Belongs to the nitroreductase family. Requires FMN as cofactor.

The protein resides in the membrane. It catalyses the reaction 2 iodide + L-tyrosine + 2 NADP(+) = 3,5-diiodo-L-tyrosine + 2 NADPH + H(+). The enzyme catalyses iodide + L-tyrosine + NADP(+) = 3-iodo-L-tyrosine + NADPH. The catalysed reaction is 3-iodo-L-tyrosine + iodide + NADP(+) = 3,5-diiodo-L-tyrosine + NADPH + H(+). It carries out the reaction L-tyrosine + chloride + NADP(+) = 3-chloro-L-tyrosine + NADPH. It catalyses the reaction bromide + L-tyrosine + NADP(+) = 3-bromo-L-tyrosine + NADPH. Its function is as follows. Catalyzes the dehalogenation of halotyrosines such as 3,5-diiodo-L-tyrosine. Likely to also catalyze the dehalogenation of other halotyrosines such as 3-bromo-L-tyrosine, 3-chloro-L-tyrosine and 3-iodo-L-tyrosine. The polypeptide is Iodotyrosine deiodinase (Hydra vulgaris (Hydra)).